The sequence spans 296 residues: Protoheme IX farnesyltransferase (296 aa).

9 consecutive transmembrane segments (helical) span residues 8–28 (VTKPGIIFGNLISVVGGFLLA), 35–55 (YPLFLATLVGVSLVVASGCVF), 84–104 (VSLVYATALGIAGFALLYIGA), 107–127 (LAMWLAVMGFVVYVGVYSLYM), 132–152 (VYGTLIGSLSGAAPPVIGYCA), 162–182 (LILLAIFSLWQMPHSYAIAIF), 208–228 (ITVYIVAFMIATLMLTLGGYA), 229–249 (GYKYLIVAAAVSVWWLGMALR), and 263–283 (LFVFSIVAITSLSVMMSIDFS).

The protein belongs to the UbiA prenyltransferase family. Protoheme IX farnesyltransferase subfamily.

The protein resides in the cell inner membrane. It carries out the reaction heme b + (2E,6E)-farnesyl diphosphate + H2O = Fe(II)-heme o + diphosphate. The protein operates within porphyrin-containing compound metabolism; heme O biosynthesis; heme O from protoheme: step 1/1. In terms of biological role, converts heme B (protoheme IX) to heme O by substitution of the vinyl group on carbon 2 of heme B porphyrin ring with a hydroxyethyl farnesyl side group. The chain is Protoheme IX farnesyltransferase from Serratia proteamaculans (strain 568).